The sequence spans 451 residues: Exodeoxyribonuclease 7 large subunit (451 aa).

The protein belongs to the XseA family. As to quaternary structure, heterooligomer composed of large and small subunits.

The protein resides in the cytoplasm. The catalysed reaction is Exonucleolytic cleavage in either 5'- to 3'- or 3'- to 5'-direction to yield nucleoside 5'-phosphates.. Its function is as follows. Bidirectionally degrades single-stranded DNA into large acid-insoluble oligonucleotides, which are then degraded further into small acid-soluble oligonucleotides. The polypeptide is Exodeoxyribonuclease 7 large subunit (Neisseria meningitidis serogroup C / serotype 2a (strain ATCC 700532 / DSM 15464 / FAM18)).